The primary structure comprises 213 residues: Large ribosomal subunit protein uL3 (213 aa).

N5-methylglutamine is present on Gln151.

The protein belongs to the universal ribosomal protein uL3 family. As to quaternary structure, part of the 50S ribosomal subunit. Forms a cluster with proteins L14 and L19. Methylated by PrmB.

Its function is as follows. One of the primary rRNA binding proteins, it binds directly near the 3'-end of the 23S rRNA, where it nucleates assembly of the 50S subunit. This is Large ribosomal subunit protein uL3 from Rhizobium etli (strain ATCC 51251 / DSM 11541 / JCM 21823 / NBRC 15573 / CFN 42).